The primary structure comprises 216 residues: FGFR1 oncogene partner 2 homolog (216 aa).

Coiled-coil stretches lie at residues 33–102 and 131–185; these read TTTL…LIMS and SKEL…ITRA. The segment at 193 to 216 is disordered; it reads EDAAESSSHSASSVPNTDLSLRKS. A compositionally biased stretch (polar residues) spans 206–216; it reads VPNTDLSLRKS.

It belongs to the SIKE family.

It localises to the cytoplasm. This chain is FGFR1 oncogene partner 2 homolog (fgfr1op2), found in Xenopus tropicalis (Western clawed frog).